The primary structure comprises 125 residues: Period circadian protein (125 aa).

The tract at residues 1-125 (EGSGGSGSSG…VTLTESLLNK (125 aa)) is disordered. Repeat copies occupy residues 30-31 (GT), 33-34 (GT), and 35-36 (GT). Over residues 30-84 (GTGGTGTNTGTNTGTGTGTGTGTGTGTGTGTGTGTGTGTGTGTGTGTGKGAGAGT) the composition is skewed to gly residues. Residues 30-86 (GTGGTGTNTGTNTGTGTGTGTGTGTGTGTGTGTGTGTGTGTGTGTGTGKGAGAGTGT) form a 28 X 2 AA approximate tandem repeats of G-[TA] region. A 4; approximate repeat occupies 37–38 (NT). The stretch at 39–40 (GT) is repeat 5. Residues 41–42 (NT) form a 6; approximate repeat. A run of 17 repeats spans residues 43-44 (GT), 45-46 (GT), 47-48 (GT), 49-50 (GT), 51-52 (GT), 53-54 (GT), 55-56 (GT), 57-58 (GT), 59-60 (GT), 61-62 (GT), 63-64 (GT), 65-66 (GT), 67-68 (GT), 69-70 (GT), 71-72 (GT), 73-74 (GT), and 75-76 (GT). One copy of the 24; approximate repeat lies at 77–78 (GK). 4 consecutive repeat copies span residues 79 to 80 (GA), 81 to 82 (GA), 83 to 84 (GT), and 85 to 86 (GT). Residues 85–112 (GTATNETAGPGTTTTTTTRSTTTAATAA) show a composition bias toward low complexity. The segment covering 116–125 (VTLTESLLNK) has biased composition (polar residues).

Forms a heterodimer with timeless (TIM); the complex then translocates into the nucleus. Post-translationally, phosphorylated with a circadian rhythmicity, probably by the double-time protein (dbt). Phosphorylation could be implicated in the stability of per monomer and in the formation of heterodimer per-tim.

It localises to the nucleus. It is found in the cytoplasm. The protein resides in the perinuclear region. In terms of biological role, essential for biological clock functions. Determines the period length of circadian and ultradian rhythms; an increase in PER dosage leads to shortened circadian rhythms and a decrease leads to lengthened circadian rhythms. Essential for the circadian rhythmicity of locomotor activity, eclosion behavior, and for the rhythmic component of the male courtship song that originates in the thoracic nervous system. The biological cycle depends on the rhythmic formation and nuclear localization of the TIM-PER complex. Light induces the degradation of TIM, which promotes elimination of PER. Nuclear activity of the heterodimer coordinatively regulates PER and TIM transcription through a negative feedback loop. Behaves as a negative element in circadian transcriptional loop. Does not appear to bind DNA, suggesting indirect transcriptional inhibition. This chain is Period circadian protein (per), found in Drosophila ananassae (Fruit fly).